The following is a 110-amino-acid chain: Minor capsid protein VP2 (110 aa).

This sequence belongs to the vesivirus VP2 protein family. As to quaternary structure, homooligomer. The portal-like structure consists in 12 copies of VP2. Interacts with capsid protein VP1.

It localises to the virion. The protein localises to the host cytoplasm. Minor structural protein that forms a portal-like structure at a unique three-fold axis of symmetry, following binding to the host receptor. The channel formed by VP2 may allow the delivery of the viral genome through the host endosomal membrane. This is Minor capsid protein VP2 from Otariidae (fur seals &amp; sea lions).